A 215-amino-acid chain; its full sequence is ATP-dependent Clp protease proteolytic subunit (215 aa).

Catalysis depends on S116, which acts as the Nucleophile. Residue H141 is part of the active site.

It belongs to the peptidase S14 family. Fourteen ClpP subunits assemble into 2 heptameric rings which stack back to back to give a disk-like structure with a central cavity, resembling the structure of eukaryotic proteasomes.

Its subcellular location is the cytoplasm. It catalyses the reaction Hydrolysis of proteins to small peptides in the presence of ATP and magnesium. alpha-casein is the usual test substrate. In the absence of ATP, only oligopeptides shorter than five residues are hydrolyzed (such as succinyl-Leu-Tyr-|-NHMec, and Leu-Tyr-Leu-|-Tyr-Trp, in which cleavage of the -Tyr-|-Leu- and -Tyr-|-Trp bonds also occurs).. Functionally, cleaves peptides in various proteins in a process that requires ATP hydrolysis. Has a chymotrypsin-like activity. Plays a major role in the degradation of misfolded proteins. This chain is ATP-dependent Clp protease proteolytic subunit, found in Psychrobacter cryohalolentis (strain ATCC BAA-1226 / DSM 17306 / VKM B-2378 / K5).